The sequence spans 425 residues: Serine--tRNA ligase (425 aa).

L-serine is bound at residue 230–232; that stretch reads TAE. Position 261-263 (261-263) interacts with ATP; sequence RSE. Residue E284 participates in L-serine binding. 348–351 provides a ligand contact to ATP; it reads EISS. Residue S384 participates in L-serine binding.

The protein belongs to the class-II aminoacyl-tRNA synthetase family. Type-1 seryl-tRNA synthetase subfamily. As to quaternary structure, homodimer. The tRNA molecule binds across the dimer.

Its subcellular location is the cytoplasm. The enzyme catalyses tRNA(Ser) + L-serine + ATP = L-seryl-tRNA(Ser) + AMP + diphosphate + H(+). It carries out the reaction tRNA(Sec) + L-serine + ATP = L-seryl-tRNA(Sec) + AMP + diphosphate + H(+). It functions in the pathway aminoacyl-tRNA biosynthesis; selenocysteinyl-tRNA(Sec) biosynthesis; L-seryl-tRNA(Sec) from L-serine and tRNA(Sec): step 1/1. Its function is as follows. Catalyzes the attachment of serine to tRNA(Ser). Is also able to aminoacylate tRNA(Sec) with serine, to form the misacylated tRNA L-seryl-tRNA(Sec), which will be further converted into selenocysteinyl-tRNA(Sec). This chain is Serine--tRNA ligase, found in Streptococcus sanguinis (strain SK36).